A 347-amino-acid polypeptide reads, in one-letter code: Toluene-4-sulfonate monooxygenase system iron-sulfur subunit TsaM1 (347 aa).

In terms of domain architecture, Rieske spans 7–109 (WYVAAWDTEI…VVERNRLVWI (103 aa)). The [2Fe-2S] cluster site is built by cysteine 48, histidine 50, cysteine 67, and histidine 70.

Homotetramer. Part of the p-toluenesulfonate methyl-monooxygenase complex TsaBM, comprising the reductase TsaB and the oxygenase TsaM. Requires [2Fe-2S] cluster as cofactor.

The enzyme catalyses toluene-4-sulfonate + NADH + O2 + H(+) = 4-(hydroxymethyl)benzenesulfonate + NAD(+) + H2O. Functionally, involved in the toluene-4-sulfonate degradation pathway. Does not discriminate between the sulfonate and the carboxyl substituents and can also be involved in the p-toluenecarboxylate degradation pathway. Can use toluene-4-sulfonate, p-toluate, m-toluate and 4-ethylbenzoate as substrates, but not p-xylene, toluene and p-cresol. Also catalyzes the demethylation of 4-methoxybenzoate to 4-hydroxybenzoate. In Comamonas testosteroni (Pseudomonas testosteroni), this protein is Toluene-4-sulfonate monooxygenase system iron-sulfur subunit TsaM1 (tsaM1).